The following is a 179-amino-acid chain: Probable RNA 2'-phosphotransferase (179 aa).

The protein belongs to the KptA/TPT1 family.

Removes the 2'-phosphate from RNA via an intermediate in which the phosphate is ADP-ribosylated by NAD followed by a presumed transesterification to release the RNA and generate ADP-ribose 1''-2''-cyclic phosphate (APPR&gt;P). May function as an ADP-ribosylase. The chain is Probable RNA 2'-phosphotransferase from Fusobacterium nucleatum subsp. nucleatum (strain ATCC 25586 / DSM 15643 / BCRC 10681 / CIP 101130 / JCM 8532 / KCTC 2640 / LMG 13131 / VPI 4355).